Here is a 182-residue protein sequence, read N- to C-terminus: UPF0397 protein SPT_0523 (182 aa).

5 helical membrane-spanning segments follow: residues 10 to 30 (VVAV…NIPT), 46 to 66 (LLSI…GHAI), 73 to 93 (YGLW…VGLF), 109 to 129 (ILIF…VLAP), and 148 to 168 (IVAG…LLLA).

Belongs to the UPF0397 family.

The protein resides in the cell membrane. This is UPF0397 protein SPT_0523 from Streptococcus pneumoniae (strain Taiwan19F-14).